A 374-amino-acid polypeptide reads, in one-letter code: MMLATTSSTFATLGEMVTVLSIDGGGIKGIIPATILEFLEGQLQEVDNNTDARLADYFDVIGGTGTGGLLTAMITTPNENNRPFAAAKDIIPFYFDHGPKIFEPSGFHLVEPKYDGKYLMQVLQEKLGETRVHQALTEVAISSFDIKTNKPVIFTKSNLAKTPELDAKMYDICYSTAAAPTYFPPHYFATNTSNGDQYDFNLVDGDVAAVDPSLLSISVATRLAQEDPAFASIKSLNYKQMLLLSLGTGTNSEFAKNYTAEEAAKWGILQWMSPLWEMRSAASSYMNDYYLSTVFQALDSQNNYLRVQENALTGTATTFDDASVANMILLVQVGENLLKKSVSEDNHETYEVALKRFAKLLSDRKKLRANKASF.

A signal peptide spans 1-11; that stretch reads MMLATTSSTFA. One can recognise a PNPLA domain in the interval 20-217; sequence LSIDGGGIKG…AAVDPSLLSI (198 aa). Positions 24-29 match the GXGXXG motif; the sequence is GGGIKG. N-linked (GlcNAc...) asparagine glycans are attached at residues asparagine 48 and asparagine 191. Aspartate 204 acts as the Proton acceptor in catalysis. Asparagine 257 is a glycosylation site (N-linked (GlcNAc...) asparagine).

The protein belongs to the patatin family. N-glycosylated. As to expression, tuber.

It localises to the vacuole. The sequence is that of Probable inactive patatin-3-Kuras 1 (pat3-k1) from Solanum tuberosum (Potato).